Consider the following 274-residue polypeptide: 2,3,4,5-tetrahydropyridine-2,6-dicarboxylate N-succinyltransferase (274 aa).

Positions 104 and 141 each coordinate substrate.

This sequence belongs to the transferase hexapeptide repeat family. In terms of assembly, homotrimer.

It localises to the cytoplasm. It carries out the reaction (S)-2,3,4,5-tetrahydrodipicolinate + succinyl-CoA + H2O = (S)-2-succinylamino-6-oxoheptanedioate + CoA. The protein operates within amino-acid biosynthesis; L-lysine biosynthesis via DAP pathway; LL-2,6-diaminopimelate from (S)-tetrahydrodipicolinate (succinylase route): step 1/3. The sequence is that of 2,3,4,5-tetrahydropyridine-2,6-dicarboxylate N-succinyltransferase from Yersinia pestis.